Consider the following 178-residue polypeptide: ATP-dependent protease subunit HslV (178 aa).

Thr-7 is an active-site residue. Residues Gly-162, Cys-165, and Thr-168 each contribute to the Na(+) site.

Belongs to the peptidase T1B family. HslV subfamily. As to quaternary structure, a double ring-shaped homohexamer of HslV is capped on each side by a ring-shaped HslU homohexamer. The assembly of the HslU/HslV complex is dependent on binding of ATP.

Its subcellular location is the cytoplasm. It carries out the reaction ATP-dependent cleavage of peptide bonds with broad specificity.. Allosterically activated by HslU binding. Its function is as follows. Protease subunit of a proteasome-like degradation complex believed to be a general protein degrading machinery. The sequence is that of ATP-dependent protease subunit HslV from Paraburkholderia xenovorans (strain LB400).